The chain runs to 380 residues: MTRRTAFFFDELCLWHAAGPHALTLPVGGWVQPPAAAGHAESPETKRRLKSLLDVSGLTARLQLRSAPPASDEDLLRVHPAHYLERFKALSDAGGGSLGQDAPIGPGSYEIARLSAGLAIAALDAVLAGEADNAYSLSRPPGHHCLPDQAMGFCFFANIAVAIEAAKARHGVERVAVLDWDVHHGNGTQAIYYRRDDVLSISLHQDGCFPPGYSGAEDIGEDRGRGFNLNVPLLPGGGHDAYMQAMQRIVLPALERFRPQLIVVASGFDANAVDPLARMQLHSDSFRAMTAMVRDAAERHAGGRLVVVHEGGYSEAYVPFCGLAVIEELSGVRSAVRDPLRDFIELQQPNAAFRDFQRQRLEELAAQFGLCPAQPLQAAR.

His144 functions as the Proton donor/acceptor in the catalytic mechanism. Positions 181, 183, and 269 each coordinate Zn(2+).

It belongs to the histone deacetylase family. Homotetramer; dimer of head-to-head dimers. The cofactor is Zn(2+).

Its activity is regulated as follows. Is inhibited by azobenzenes, stilbenes and arylazopyrazoles. Probable protein deacetylase that catalyzes deacetylation of acetylated lysine residues. In vitro, exhibits high activity against artificial HDAC (histone deacetylase) substrates containing acetylated and trifluoroacetylated lysine residues. Is not able to deacetylate acetylated polyamines. The polypeptide is Histone deacetylase-like amidohydrolase (Pseudomonas aeruginosa (strain ATCC 15692 / DSM 22644 / CIP 104116 / JCM 14847 / LMG 12228 / 1C / PRS 101 / PAO1)).